A 267-amino-acid polypeptide reads, in one-letter code: Hydroxyethylthiazole kinase (267 aa).

Met-46 is a substrate binding site. Residues Arg-122 and Ser-168 each coordinate ATP. Position 195 (Gly-195) interacts with substrate.

It belongs to the Thz kinase family. It depends on Mg(2+) as a cofactor.

The enzyme catalyses 5-(2-hydroxyethyl)-4-methylthiazole + ATP = 4-methyl-5-(2-phosphooxyethyl)-thiazole + ADP + H(+). Its pathway is cofactor biosynthesis; thiamine diphosphate biosynthesis; 4-methyl-5-(2-phosphoethyl)-thiazole from 5-(2-hydroxyethyl)-4-methylthiazole: step 1/1. Functionally, catalyzes the phosphorylation of the hydroxyl group of 4-methyl-5-beta-hydroxyethylthiazole (THZ). This is Hydroxyethylthiazole kinase from Nitratidesulfovibrio vulgaris (strain ATCC 29579 / DSM 644 / CCUG 34227 / NCIMB 8303 / VKM B-1760 / Hildenborough) (Desulfovibrio vulgaris).